We begin with the raw amino-acid sequence, 214 residues long: MIDPLHTAPPLLAARALAFSRNEEPVFGPLDFHVDAGEALLVQGDNGAGKTTLLRVLAGLLHVERGEILIDGKTARRGDRSRFMAYLGHLPGLKADLSTLENLHFLCGLHGRRAKQMPGSALAIVGLAGYEDALVRQLSAGQRKRLALARLWLSPAPLWLLDEPYANLDLEGITLVNRMISAHLRGGGAALVTTHGAYAAPPVRTRMLTLEAAA.

Residues 12-214 (LAARALAFSR…TRMLTLEAAA (203 aa)) enclose the ABC transporter domain. 44 to 51 (GDNGAGKT) provides a ligand contact to ATP.

The protein belongs to the ABC transporter superfamily. CcmA exporter (TC 3.A.1.107) family. In terms of assembly, the complex is composed of two ATP-binding proteins (CcmA) and two transmembrane proteins (CcmB).

It is found in the cell inner membrane. The catalysed reaction is heme b(in) + ATP + H2O = heme b(out) + ADP + phosphate + H(+). Functionally, part of the ABC transporter complex CcmAB involved in the biogenesis of c-type cytochromes; once thought to export heme, this seems not to be the case, but its exact role is uncertain. Responsible for energy coupling to the transport system. In Xanthomonas campestris pv. campestris (strain 8004), this protein is Cytochrome c biogenesis ATP-binding export protein CcmA.